Reading from the N-terminus, the 598-residue chain is Ceramide transfer protein (598 aa).

Over residues 1–11 (MSDNQSWNSSG) the composition is skewed to polar residues. The disordered stretch occupies residues 1–24 (MSDNQSWNSSGSEEDPETESGPPV). The region spanning 23–117 (PVERCGVLSK…WIDAIEQHKT (95 aa)) is the PH domain. Ser-126 bears the Phosphoserine mark. Ser-132 carries the phosphoserine; by PKD modification. Ser-135 carries the post-translational modification Phosphoserine. Residues 202–221 (DDEDDFPTTRSDGDFLHNTN) are disordered. The stretch at 268-301 (KREESWQKRHDKEMEKRRRLEEAYKNAMAELKKK) forms a coiled coil. Phosphoserine is present on Ser-315. Residues 321 to 327 (EFFDAVE) carry the FFAT motif. An START domain is found at 363-592 (GTHRFVQKVE…FTSYVQEKTA (230 aa)). Residues Glu-446, Gln-467, Asn-504, and Tyr-553 each coordinate an N-acylsphing-4-enine.

As to quaternary structure, interacts with VAPA and VAPB. Interaction with VAPB is less efficient than with VAPA. Interacts (via FFAT motif) with the MOSPD2 (via MSP domain). Phosphorylation on Ser-132 decreases the affinity toward phosphatidylinositol 4-phosphate at Golgi membranes and reduces ceramide transfer activity. Inactivated by hyperphosphorylation of serine residues by CSNK1G2/CK1 that triggers dissociation from the Golgi complex, thus down-regulating ER-to-Golgi transport of ceramide and sphingomyelin synthesis.

Its subcellular location is the cytoplasm. It localises to the golgi apparatus. The protein resides in the endoplasmic reticulum. It catalyses the reaction N-hexadecanoylsphing-4-enine(in) = N-hexadecanoylsphing-4-enine(out). Shelters ceramides and diacylglycerol lipids inside its START domain and mediates the intracellular trafficking of ceramides and diacylglycerol lipids in a non-vesicular manner. The protein is Ceramide transfer protein (CERT1) of Cricetulus griseus (Chinese hamster).